A 913-amino-acid chain; its full sequence is Transient receptor potential cation channel protein painless (913 aa).

The Cytoplasmic segment spans residues 1–490 (MDFNNCGFID…SSFLFLKWHR (490 aa)). ANK repeat units follow at residues 154 to 189 (GEFTPLHHVLRKSKVKAGKKELIQLFLDHPELDIDS), 260 to 289 (EYFGLLQESIKRGRQRAFDVILSTGMDINS), and 368 to 397 (GRLVPLFFAVKYRNTSAMQKLLKNGAYIGS). A helical membrane pass occupies residues 491–511 (LSVIFYLNFLIYSLFTASIIT). At 512–523 (YTLLKFHESDQR) the chain is on the extracellular side. Residues 524-544 (ALTAFFGLLSWLGISYLILRE) form a helical membrane-spanning segment. The Cytoplasmic portion of the chain corresponds to 545–555 (CIQWIMSPVRY). A helical transmembrane segment spans residues 556 to 576 (FWSITNIMEVALITLSIFTCM). The Extracellular segment spans residues 577–586 (ESSFDKETQR). A helical membrane pass occupies residues 587 to 607 (VLAVFTILLVSMEFCLLVGSL). The Cytoplasmic segment spans residues 608 to 628 (PVLSISTHMLMLREVSNSFLK). Residues 629–649 (SFTLYSIFVLTFSLCFYILFG) traverse the membrane as a helical segment. The Extracellular portion of the chain corresponds to 650-708 (KSVEEDQSKSATPCPPLGKKEGKDEEQGFNTFTKPIEAVIKTIVMLTGEFDAGSIQFTS). Residues 656-675 (QSKSATPCPPLGKKEGKDEE) form a disordered region. A helical membrane pass occupies residues 709-729 (IYTYLIFLLFVIFMTIVLFNL). The Cytoplasmic portion of the chain corresponds to 730–913 (LNGLAVSDTQ…QLIQLVQDRK (184 aa)).

Belongs to the transient receptor (TC 1.A.4) family. Present in multidendritic neurons, chordotonal neurons, a subset of cells in the central nervous system and a subset of sensory neurons in the antennal-maxillary complex. Not detected in gonads and dorsal vessels (at protein level). Expressed in peripheral neurons that extend multiple branched dendrites beneath the larval epidermis, similar to vertebrate pain receptors.

It localises to the membrane. Its function is as follows. Receptor-activated non-selective cation channel involved in detection of pain sensation due to high temperature. Involved in heat nociception by being activated by noxious temperature of 38 degrees Celsius. This is Transient receptor potential cation channel protein painless (pain) from Drosophila melanogaster (Fruit fly).